We begin with the raw amino-acid sequence, 61 residues long: MAKTSKIVQSQRASKFKVQHHNRCSRCGRPRGYINRFGLCRICFRELALQGQIPGVRKSSW.

Residues Cys24, Cys27, Cys40, and Cys43 each coordinate Zn(2+).

It belongs to the universal ribosomal protein uS14 family. Zinc-binding uS14 subfamily. Part of the 30S ribosomal subunit. Contacts proteins S3 and S10. Requires Zn(2+) as cofactor.

Its function is as follows. Binds 16S rRNA, required for the assembly of 30S particles and may also be responsible for determining the conformation of the 16S rRNA at the A site. The polypeptide is Small ribosomal subunit protein uS14 (Dehalococcoides mccartyi (strain ATCC BAA-2266 / KCTC 15142 / 195) (Dehalococcoides ethenogenes (strain 195))).